The chain runs to 512 residues: Oryzalexin E synthase (512 aa).

Residues 6–26 traverse the membrane as a helical segment; that stretch reads SELWMTAVATCMSLLLYLTIL. Cys-452 serves as a coordination point for heme.

This sequence belongs to the cytochrome P450 family. Heme is required as a cofactor.

It is found in the membrane. The catalysed reaction is ent-sandaracopimaradien-3beta-ol + reduced [NADPH--hemoprotein reductase] + O2 = oryzalexin E + oxidized [NADPH--hemoprotein reductase] + H2O + H(+). Functionally, enzyme of the diterpenoid metabolism involved in the biosynthesis of the oryzalexin class of phytoalexins. Can use ent-sandaracopimaradien and syn-stemodene as substrates, but no activity with syn-stemoden-19-oic acid. Hydroxylates 3-alpha-hydroxy-ent-sandaracopimaradiene at C-9-beta, resulting in a 3-alpha,9-beta-diol corresponding to oryzalexins E. The protein is Oryzalexin E synthase of Oryza sativa subsp. japonica (Rice).